Here is a 429-residue protein sequence, read N- to C-terminus: Enolase (429 aa).

Q163 contacts (2R)-2-phosphoglycerate. Residue E205 is the Proton donor of the active site. Residues D242, E287, and D314 each coordinate Mg(2+). Residues K339, R368, S369, and K390 each coordinate (2R)-2-phosphoglycerate. K339 acts as the Proton acceptor in catalysis.

This sequence belongs to the enolase family. Requires Mg(2+) as cofactor.

The protein resides in the cytoplasm. The protein localises to the secreted. Its subcellular location is the cell surface. It carries out the reaction (2R)-2-phosphoglycerate = phosphoenolpyruvate + H2O. Its pathway is carbohydrate degradation; glycolysis; pyruvate from D-glyceraldehyde 3-phosphate: step 4/5. In terms of biological role, catalyzes the reversible conversion of 2-phosphoglycerate (2-PG) into phosphoenolpyruvate (PEP). It is essential for the degradation of carbohydrates via glycolysis. The sequence is that of Enolase from Magnetococcus marinus (strain ATCC BAA-1437 / JCM 17883 / MC-1).